Reading from the N-terminus, the 634-residue chain is Threonine--tRNA ligase (634 aa).

Residues 1–61 (MINIRFPDGS…NSNCELRLIT (61 aa)) enclose the TGS domain. The tract at residues 241 to 532 (DHRKIGKVLD…LIEHYAGNLP (292 aa)) is catalytic. Positions 332, 383, and 509 each coordinate Zn(2+).

The protein belongs to the class-II aminoacyl-tRNA synthetase family. Homodimer. Zn(2+) serves as cofactor.

The protein localises to the cytoplasm. It carries out the reaction tRNA(Thr) + L-threonine + ATP = L-threonyl-tRNA(Thr) + AMP + diphosphate + H(+). Catalyzes the attachment of threonine to tRNA(Thr) in a two-step reaction: L-threonine is first activated by ATP to form Thr-AMP and then transferred to the acceptor end of tRNA(Thr). Also edits incorrectly charged L-seryl-tRNA(Thr). This Francisella tularensis subsp. tularensis (strain WY96-3418) protein is Threonine--tRNA ligase.